A 1064-amino-acid polypeptide reads, in one-letter code: Importin-13 homolog A (1064 aa).

Residues 40–109 (ALPQIQQWLI…LDNLLLFLKT (70 aa)) form the Importin N-terminal domain. 2 disordered regions span residues 695 to 722 (TTQQ…NNNN) and 839 to 860 (NNKK…NENN). Residues 700–722 (NNNNNNNNNNNNNNNNNNNNNNN) are compositionally biased toward low complexity.

Belongs to the importin beta family. As to quaternary structure, forms a complex with an importin alpha subunit.

It localises to the cytoplasm. The protein resides in the nucleus envelope. Functionally, required for nuclear protein import and mediates docking of import substrate to distinct nucleoporins. This is Importin-13 homolog A (ipo13A) from Dictyostelium discoideum (Social amoeba).